We begin with the raw amino-acid sequence, 183 residues long: UPF0200 protein MmarC7_0527 (183 aa).

8 to 15 (GMPGSGKS) is a binding site for ATP.

The protein belongs to the UPF0200 family.

The protein is UPF0200 protein MmarC7_0527 of Methanococcus maripaludis (strain C7 / ATCC BAA-1331).